Reading from the N-terminus, the 327-residue chain is rRNA 2'-O-methyltransferase fibrillarin (327 aa).

Positions 1-96 (MGTDYRNSGR…GFKGGAKTMV (96 aa)) are disordered. Arg-10, Arg-19, Arg-44, Arg-49, Arg-55, Arg-65, Arg-69, and Arg-78 each carry asymmetric dimethylarginine. The segment covering 22-56 (GNDRRDSGRSFGDRRPERPDFKRGDGGRGFGDRRG) has biased composition (basic and acidic residues). Gly residues predominate over residues 73–90 (DGPGGRGGPGGPGGGFKG). S-adenosyl-L-methionine-binding positions include 181–182 (TT), 200–201 (EF), 225–226 (DA), and 245–248 (DVAQ).

The protein belongs to the methyltransferase superfamily. Fibrillarin family. As to quaternary structure, component of box C/D small nucleolar ribonucleoprotein (snoRNP) particles. It is associated with the U3, U8 and U13 small nuclear RNAs. By homology to other fibrillarins, some or all of the N-terminal domain arginines are modified to asymmetric dimethylarginine (DMA).

Its subcellular location is the nucleus. It is found in the nucleolus. The enzyme catalyses L-glutaminyl-[histone H2A] + S-adenosyl-L-methionine = N(5)-methyl-L-glutaminyl-[histone H2A] + S-adenosyl-L-homocysteine + H(+). S-adenosyl-L-methionine-dependent methyltransferase that has the ability to methylate both RNAs and proteins. Involved in pre-rRNA processing. Utilizes the methyl donor S-adenosyl-L-methionine to catalyze the site-specific 2'-hydroxyl methylation of ribose moieties in pre-ribosomal RNA. Site specificity is provided by a guide RNA that base pairs with the substrate. Methylation occurs at a characteristic distance from the sequence involved in base pairing with the guide RNA. Also acts as a protein methyltransferase by mediating methylation of 'Gln-105' of histone H2A (H2AQ105me), a modification that impairs binding of the FACT complex and is specifically present at 35S ribosomal DNA locus. This Giardia intestinalis (Giardia lamblia) protein is rRNA 2'-O-methyltransferase fibrillarin.